The chain runs to 499 residues: Probable cytosol aminopeptidase (499 aa).

Residues K263 and D268 each coordinate Mn(2+). The active site involves K275. Residues D286, D345, and E347 each coordinate Mn(2+). R349 is a catalytic residue.

Belongs to the peptidase M17 family. Mn(2+) serves as cofactor.

It is found in the cytoplasm. It catalyses the reaction Release of an N-terminal amino acid, Xaa-|-Yaa-, in which Xaa is preferably Leu, but may be other amino acids including Pro although not Arg or Lys, and Yaa may be Pro. Amino acid amides and methyl esters are also readily hydrolyzed, but rates on arylamides are exceedingly low.. The catalysed reaction is Release of an N-terminal amino acid, preferentially leucine, but not glutamic or aspartic acids.. Presumably involved in the processing and regular turnover of intracellular proteins. Catalyzes the removal of unsubstituted N-terminal amino acids from various peptides. The polypeptide is Probable cytosol aminopeptidase (Chlamydia trachomatis serovar L2 (strain ATCC VR-902B / DSM 19102 / 434/Bu)).